The following is a 452-amino-acid chain: Phosphoglucosamine mutase (452 aa).

The active-site Phosphoserine intermediate is serine 103. 4 residues coordinate Mg(2+): serine 103, aspartate 244, aspartate 246, and aspartate 248. Serine 103 is modified (phosphoserine).

This sequence belongs to the phosphohexose mutase family. Mg(2+) is required as a cofactor. In terms of processing, activated by phosphorylation.

It carries out the reaction alpha-D-glucosamine 1-phosphate = D-glucosamine 6-phosphate. In terms of biological role, catalyzes the conversion of glucosamine-6-phosphate to glucosamine-1-phosphate. In Rhodospirillum rubrum (strain ATCC 11170 / ATH 1.1.1 / DSM 467 / LMG 4362 / NCIMB 8255 / S1), this protein is Phosphoglucosamine mutase.